A 302-amino-acid polypeptide reads, in one-letter code: Recombination-associated protein RdgC (302 aa).

The protein belongs to the RdgC family.

It localises to the cytoplasm. It is found in the nucleoid. Functionally, may be involved in recombination. In Haemophilus influenzae (strain PittGG), this protein is Recombination-associated protein RdgC.